Here is a 121-residue protein sequence, read N- to C-terminus: Large ribosomal subunit protein uL14c (121 aa).

The protein belongs to the universal ribosomal protein uL14 family. Part of the 50S ribosomal subunit.

The protein localises to the plastid. It localises to the organellar chromatophore. Its function is as follows. Binds to 23S rRNA. In Paulinella chromatophora, this protein is Large ribosomal subunit protein uL14c.